The sequence spans 201 residues: Thylakoid membrane protein slr1796 (201 aa).

Residues 16–36 (FLIVSLAFAMLLLGIWGTLPF) traverse the membrane as a helical segment.

It localises to the cellular thylakoid membrane. The sequence is that of Thylakoid membrane protein slr1796 from Synechocystis sp. (strain ATCC 27184 / PCC 6803 / Kazusa).